We begin with the raw amino-acid sequence, 312 residues long: Ribosomal RNA small subunit methyltransferase H (312 aa).

S-adenosyl-L-methionine is bound by residues 30 to 32 (GGH), aspartate 50, phenylalanine 80, aspartate 98, and glutamine 105.

This sequence belongs to the methyltransferase superfamily. RsmH family.

The protein localises to the cytoplasm. It carries out the reaction cytidine(1402) in 16S rRNA + S-adenosyl-L-methionine = N(4)-methylcytidine(1402) in 16S rRNA + S-adenosyl-L-homocysteine + H(+). Functionally, specifically methylates the N4 position of cytidine in position 1402 (C1402) of 16S rRNA. The polypeptide is Ribosomal RNA small subunit methyltransferase H (Lawsonia intracellularis (strain PHE/MN1-00)).